A 681-amino-acid chain; its full sequence is Epithelial splicing regulatory protein 1 (681 aa).

RRM domains follow at residues 225 to 302, 326 to 406, and 445 to 525; these read TVVR…KATG, VIVR…RSTA, and DCIR…QCSA. Ser-543 is modified (phosphoserine). Arg-582 carries the post-translational modification Omega-N-methylarginine.

The protein belongs to the ESRP family. In terms of tissue distribution, epithelial cell-specific.

Its subcellular location is the nucleus. Its function is as follows. mRNA splicing factor that regulates the formation of epithelial cell-specific isoforms. Specifically regulates the expression of FGFR2-IIIb, an epithelial cell-specific isoform of FGFR2. Also regulates the splicing of CD44, CTNND1, ENAH, 3 transcripts that undergo changes in splicing during the epithelial-to-mesenchymal transition (EMT). Acts by directly binding specific sequences in mRNAs. Binds the GU-rich sequence motifs in the ISE/ISS-3, a cis-element regulatory region present in the mRNA of FGFR2. Regulates splicing and expression of genes involved in inner ear development, auditory hair cell differentiation, and cell fate specification in the cochlear epithelium. The polypeptide is Epithelial splicing regulatory protein 1 (ESRP1) (Homo sapiens (Human)).